The primary structure comprises 817 residues: Protein EFR3 homolog B (817 aa).

A phosphoserine mark is found at S212, S214, and S216.

The protein belongs to the EFR3 family. Component of a phosphatidylinositol 4-kinase (PI4K) complex, composed of PI4KA, EFR3 (EFR3A or EFR3B), TTC7 (TTC7A or TTC7B) and HYCC (HYCC1 or HYCC2). Palmitoylated at its N-terminus, anchoring the protein to the plasma membrane.

It localises to the cell membrane. The protein resides in the cytoplasm. Its subcellular location is the cytosol. Functionally, component of a complex required to localize phosphatidylinositol 4-kinase (PI4K) to the plasma membrane. The complex acts as a regulator of phosphatidylinositol 4-phosphate (PtdIns(4)P) synthesis. In the complex, EFR3B probably acts as the membrane-anchoring component. Also involved in responsiveness to G-protein-coupled receptors; it is however unclear whether this role is direct or indirect. The chain is Protein EFR3 homolog B from Homo sapiens (Human).